Reading from the N-terminus, the 120-residue chain is Large ribosomal subunit protein bL12 (120 aa).

The protein belongs to the bacterial ribosomal protein bL12 family. In terms of assembly, homodimer. Part of the ribosomal stalk of the 50S ribosomal subunit. Forms a multimeric L10(L12)X complex, where L10 forms an elongated spine to which 2 to 4 L12 dimers bind in a sequential fashion. Binds GTP-bound translation factors.

Functionally, forms part of the ribosomal stalk which helps the ribosome interact with GTP-bound translation factors. Is thus essential for accurate translation. This chain is Large ribosomal subunit protein bL12, found in Pseudoalteromonas translucida (strain TAC 125).